Reading from the N-terminus, the 327-residue chain is ATPase ASNA1 homolog (327 aa).

26–33 (KGGVGKTT) contacts ATP. D57 is a catalytic residue. The ATP site is built by E238 and N265. Zn(2+) contacts are provided by C274 and C277.

It belongs to the arsA ATPase family. As to quaternary structure, homodimer.

It localises to the cytoplasm. The protein localises to the endoplasmic reticulum. Its function is as follows. ATPase required for the post-translational delivery of tail-anchored (TA) proteins to the endoplasmic reticulum. Recognizes and selectively binds the transmembrane domain of TA proteins in the cytosol. This complex then targets to the endoplasmic reticulum by membrane-bound receptors, where the tail-anchored protein is released for insertion. This process is regulated by ATP binding and hydrolysis. ATP binding drives the homodimer towards the closed dimer state, facilitating recognition of newly synthesized TA membrane proteins. ATP hydrolysis is required for insertion. Subsequently, the homodimer reverts towards the open dimer state, lowering its affinity for the membrane-bound receptor, and returning it to the cytosol to initiate a new round of targeting. This is ATPase ASNA1 homolog from Entamoeba histolytica (strain ATCC 30459 / HM-1:IMSS / ABRM).